The chain runs to 168 residues: Peptide deformylase 1 (168 aa).

Residues cysteine 91 and histidine 133 each coordinate Fe cation. Glutamate 134 is an active-site residue. Position 137 (histidine 137) interacts with Fe cation.

It belongs to the polypeptide deformylase family. Fe(2+) serves as cofactor.

The enzyme catalyses N-terminal N-formyl-L-methionyl-[peptide] + H2O = N-terminal L-methionyl-[peptide] + formate. Functionally, removes the formyl group from the N-terminal Met of newly synthesized proteins. Requires at least a dipeptide for an efficient rate of reaction. N-terminal L-methionine is a prerequisite for activity but the enzyme has broad specificity at other positions. The chain is Peptide deformylase 1 from Shewanella oneidensis (strain ATCC 700550 / JCM 31522 / CIP 106686 / LMG 19005 / NCIMB 14063 / MR-1).